The sequence spans 637 residues: Chaperone protein DnaK (637 aa).

Position 196 is a phosphothreonine; by autocatalysis (threonine 196). The interval 598–637 (AEAPGADAPEGQAPQDGGSKKGGEGAVENAEYEVIDGDGK) is disordered. The span at 627–637 (AEYEVIDGDGK) shows a compositional bias: acidic residues.

The protein belongs to the heat shock protein 70 family.

Acts as a chaperone. The sequence is that of Chaperone protein DnaK from Chlorobium luteolum (strain DSM 273 / BCRC 81028 / 2530) (Pelodictyon luteolum).